The sequence spans 214 residues: CASP-like protein 0U1 (214 aa).

At 1–82 (MATSEAPLLK…GFTSFYQFKG (82 aa)) the chain is on the cytoplasmic side. Residues 83–103 (VVGVYAAFWVYTVLLIGLYLF) form a helical membrane-spanning segment. Residues 104–112 (SRGPPPGTE) lie on the Extracellular side of the membrane. A helical membrane pass occupies residues 113–133 (FVVHALFTLCMIAFVSLSVIS). The Cytoplasmic segment spans residues 134 to 153 (CTSTVIESDYSVCKNAAYAK). A helical membrane pass occupies residues 154–174 (ASLVFAALVVVLNCATCAFVF). Over 175–214 (KQWRSLQFVGMPENFRPFGRHRHKHGHHAGDADDAIPTHP) the chain is Extracellular. Residues 194-214 (RHRHKHGHHAGDADDAIPTHP) form a disordered region.

This sequence belongs to the Casparian strip membrane proteins (CASP) family. In terms of assembly, homodimer and heterodimers.

It is found in the cell membrane. The chain is CASP-like protein 0U1 from Ostreococcus tauri.